We begin with the raw amino-acid sequence, 684 residues long: DNA ligase (684 aa).

Residues Asp46–Asp50, Ser100–Leu101, and Glu130 each bind NAD(+). The active-site N6-AMP-lysine intermediate is Lys132. Residues Arg153, Glu187, Lys303, and Lys327 each contribute to the NAD(+) site. The Zn(2+) site is built by Cys421, Cys424, Cys439, and Cys444. The 81-residue stretch at Asp604–Lys684 folds into the BRCT domain.

Belongs to the NAD-dependent DNA ligase family. LigA subfamily. Mg(2+) serves as cofactor. It depends on Mn(2+) as a cofactor.

The catalysed reaction is NAD(+) + (deoxyribonucleotide)n-3'-hydroxyl + 5'-phospho-(deoxyribonucleotide)m = (deoxyribonucleotide)n+m + AMP + beta-nicotinamide D-nucleotide.. DNA ligase that catalyzes the formation of phosphodiester linkages between 5'-phosphoryl and 3'-hydroxyl groups in double-stranded DNA using NAD as a coenzyme and as the energy source for the reaction. It is essential for DNA replication and repair of damaged DNA. The protein is DNA ligase of Oenococcus oeni (strain ATCC BAA-331 / PSU-1).